A 580-amino-acid polypeptide reads, in one-letter code: MSKKKMAITLSAMLSATIIPSFTMDVHAEKKEETKNTKIELENGMTKPIYSLDEAIMDENLYVETEVDSDQDGKKDRVSIKVMRPKTDPNVKVPVIYEMSPYRSGLKDVPVYNVDEELYAYEGKPYGAINLGSYGNYYVPRGYAVILGESIGTGKSDGCPTTGDEQEILGTKSVIDWVNGRAKAFTEQGEEVQANWSTGNVGMTGVSYNGTLPNAVATTGVEGLKTIIPIAAISSWYDYYRANGAVIAPGGYQGEDTDNMAEAVLTRENPEVCGQVIKELTAGQDRKTGNYNDFWDKRNYVKDAKNVKASVFVVHGLNDWNVKTKQFAQWWEALGENNVPRKMWLHQGGHGGTSSNNWQQTQNKWLDYWLYGIENGIMDEPMVDVQRENKTWQKIKNWPDPAAVPSKIRMYLSNKSVNLPLSMGSANKVFSFLDDAQIKSNQLVANPELEVANRLVYTMPVLQKDTRISGTPKISITGNIDRSVSNLTALLVDYGGAKPEIVTRGWMDPQNVKSIENSTAIQPGKDYTFTWDMQPDDYVFKAGHQIGVVLIASDYDYTIRPKAGTKLTVKLSEVTLPIVK.

Catalysis depends on charge relay system residues Ser-207, Asp-319, and His-350.

It belongs to the peptidase S15 family.

It carries out the reaction Hydrolyzes Xaa-Pro-|- bonds to release unblocked, N-terminal dipeptides from substrates including Ala-Pro-|-p-nitroanilide and (sequentially) Tyr-Pro-|-Phe-Pro-|-Gly-Pro-|-Ile.. This is Putative Xaa-Pro dipeptidyl-peptidase from Bacillus cereus (strain ATCC 14579 / DSM 31 / CCUG 7414 / JCM 2152 / NBRC 15305 / NCIMB 9373 / NCTC 2599 / NRRL B-3711).